Consider the following 1162-residue polypeptide: Nucleoporin nup132 (1162 aa).

The protein belongs to the nucleoporin Nup133 family. Component of the npc107-120 complex which consists of nup85, nup107, nup120, nup131, nup132 and seh1. Interacts with nup107.

The protein localises to the nucleus envelope. Its function is as follows. Functions as a component of the nuclear pore complex (NPC). NPC components, collectively referred to as nucleoporins (NUPs), can play the role of both NPC structural components and of docking or interaction partners for transiently associated nuclear transport factors. Active directional transport is assured by both, a Phe-Gly (FG) repeat affinity gradient for these transport factors across the NPC and a transport cofactor concentration gradient across the nuclear envelope. This Schizosaccharomyces pombe (strain 972 / ATCC 24843) (Fission yeast) protein is Nucleoporin nup132 (nup132).